The chain runs to 490 residues: Betaine aldehyde dehydrogenase (490 aa).

Positions 26, 27, and 93 each coordinate K(+). 150 to 152 lines the NAD(+) pocket; sequence GAW. The Charge relay system role is filled by K162. 176–179 is an NAD(+) binding site; that stretch reads KPSE. Position 180 (V180) interacts with K(+). Residue 230-233 participates in NAD(+) binding; the sequence is GVAS. K(+) is bound at residue L246. E252 serves as the catalytic Proton acceptor. Residues G254, C286, and E387 each contribute to the NAD(+) site. C286 serves as the catalytic Nucleophile. Position 286 is a cysteine sulfenic acid (-SOH) (C286). Positions 457 and 460 each coordinate K(+). The active-site Charge relay system is E464.

Belongs to the aldehyde dehydrogenase family. As to quaternary structure, dimer of dimers. K(+) is required as a cofactor.

The catalysed reaction is betaine aldehyde + NAD(+) + H2O = glycine betaine + NADH + 2 H(+). It functions in the pathway amine and polyamine biosynthesis; betaine biosynthesis via choline pathway; betaine from betaine aldehyde: step 1/1. In terms of biological role, involved in the biosynthesis of the osmoprotectant glycine betaine. Catalyzes the irreversible oxidation of betaine aldehyde to the corresponding acid. The polypeptide is Betaine aldehyde dehydrogenase (Escherichia coli O9:H4 (strain HS)).